The sequence spans 468 residues: MGRVRKSDFGSIVLVLCCVLNSLLCNGGITSRYVRKLEATVDMPLDSDVFRVPCGYNAPQQVHITQGDVEGKAVIVSWVTQEAKGSNKVIYWKENSTKKHKAHGKTNTYKFYNYTSGFIHHCPIRNLEYDTKYYYVLGVGQTERKFWFFTPPEIGPDVPYTFGLIGDLGQSYDSNITLTHYENNPTKGQAVLFVGDISYADTYPDHDNRRWDSWGRFAERSTAYQPWIWTTGNHELDFAPEIGENRPFKPFTHRYRTPYRSSGSTEPFWYSIKRGPAYIIVLASYSAYGKYTPQYQWLEEEFPKVNRTETPWLIVLMHSPWYNSYDYHYMEGETMRVMYEAWFVKYKVDVVFAGHVHAYERSERVSNIAYNVVNGICTPVKDQSAPVYITIGDGGNIEGLATKMTEPQPKYSAFREASFGHAIFSIKNRTHAHYGWHRNHDGYAVEGDRMWFYNRFWHPVDDSPSCNS.

An N-terminal signal peptide occupies residues 1–25 (MGRVRKSDFGSIVLVLCCVLNSLLC). N-linked (GlcNAc...) asparagine glycans are attached at residues asparagine 95 and asparagine 113. Aspartate 167 contributes to the Fe cation binding site. N-linked (GlcNAc...) asparagine glycosylation is present at asparagine 175. The Fe cation site is built by aspartate 196 and tyrosine 199. Residue aspartate 196 participates in Zn(2+) binding. Residue asparagine 233 coordinates Zn(2+). Position 233 (asparagine 233) interacts with substrate. Asparagine 306 carries N-linked (GlcNAc...) asparagine glycosylation. Histidine 318 serves as a coordination point for Zn(2+). Histidine 328 (proton donor) is an active-site residue. A Zn(2+)-binding site is contributed by histidine 355. Substrate is bound at residue 355–357 (HVH). Histidine 357 is a binding site for Fe cation. The N-linked (GlcNAc...) asparagine glycan is linked to asparagine 428.

Belongs to the metallophosphoesterase superfamily. Purple acid phosphatase family. As to quaternary structure, homodimer; disulfide-linked. Requires Fe cation as cofactor. It depends on Zn(2+) as a cofactor. Expressed in roots, stems, leaves, flowers and siliques.

Its subcellular location is the secreted. It is found in the cytoplasm. The enzyme catalyses a phosphate monoester + H2O = an alcohol + phosphate. This is Purple acid phosphatase 10 (PAP10) from Arabidopsis thaliana (Mouse-ear cress).